The chain runs to 179 residues: Large ribosomal subunit protein uL6 (179 aa).

The protein belongs to the universal ribosomal protein uL6 family. Part of the 50S ribosomal subunit.

Its function is as follows. This protein binds to the 23S rRNA, and is important in its secondary structure. It is located near the subunit interface in the base of the L7/L12 stalk, and near the tRNA binding site of the peptidyltransferase center. The chain is Large ribosomal subunit protein uL6 from Acidobacterium capsulatum (strain ATCC 51196 / DSM 11244 / BCRC 80197 / JCM 7670 / NBRC 15755 / NCIMB 13165 / 161).